The following is a 152-amino-acid chain: Large ribosomal subunit protein uL15 (152 aa).

Residues 1–57 (MTSTLNTLKSNSGSRKKKLRKGRGIAAGQGASCGFGMRGQKSRSGRPTRPGFEGGQM) form a disordered region. Residues 14–23 (SRKKKLRKGR) are compositionally biased toward basic residues. Residues 25–37 (IAAGQGASCGFGM) show a composition bias toward gly residues.

Belongs to the universal ribosomal protein uL15 family. As to quaternary structure, part of the 50S ribosomal subunit.

In terms of biological role, binds to the 23S rRNA. This Prochlorococcus marinus (strain MIT 9301) protein is Large ribosomal subunit protein uL15.